Here is a 109-residue protein sequence, read N- to C-terminus: MSLTADPPACTVPAAGVSSTHKLVNGGAEKIVFKIKSSNNNEYRIAPVFGFVDPSGSKDVVITRTAGAPKEDKLVVHFASAPADATDAQAAFVAVAPAGTVTIPMSATA.

The region spanning 1–109 is the MSP domain; sequence MSLTADPPAC…TVTIPMSATA (109 aa).

As to quaternary structure, monomer. Expressed at higher level in testis.

This is Sperm-specific class P protein 19 (ssp-19) from Caenorhabditis elegans.